The following is a 518-amino-acid chain: uncharacterized protein (518 aa).

A run of 14 helical transmembrane segments spans residues 13–33 (WAIS…GIIS), 49–69 (WGSW…PIVG), 86–106 (CLFG…LFLI), 109–129 (LIQA…ILAT), 141–161 (LLGA…SFLL), 169–189 (WLFL…ACFI), 202–222 (AAGI…MTNL), 231–251 (LGNP…AALI), 280–300 (LIIG…PSYV), 312–332 (GYWM…GGAL), 341–361 (TVIL…LWVT), 365–385 (EFVI…GAPL), 410–430 (IGLT…FDQI), and 493–513 (LYAA…IPAF).

The protein belongs to the major facilitator superfamily. TCR/Tet family.

It localises to the cell membrane. This is an uncharacterized protein from Bacillus subtilis (strain 168).